Reading from the N-terminus, the 398-residue chain is Acetate kinase (398 aa).

Residue Asn-10 participates in Mg(2+) binding. Lys-17 lines the ATP pocket. Residue Arg-89 participates in substrate binding. Asp-148 acts as the Proton donor/acceptor in catalysis. Residues 208–212, 283–285, and 331–335 contribute to the ATP site; these read HLGNG, DCR, and GIGEN. Glu-385 lines the Mg(2+) pocket.

It belongs to the acetokinase family. As to quaternary structure, homodimer. It depends on Mg(2+) as a cofactor. Mn(2+) is required as a cofactor.

It localises to the cytoplasm. It carries out the reaction acetate + ATP = acetyl phosphate + ADP. It functions in the pathway metabolic intermediate biosynthesis; acetyl-CoA biosynthesis; acetyl-CoA from acetate: step 1/2. Catalyzes the formation of acetyl phosphate from acetate and ATP. Can also catalyze the reverse reaction. The polypeptide is Acetate kinase (Histophilus somni (strain 2336) (Haemophilus somnus)).